The sequence spans 488 residues: Ribulose bisphosphate carboxylase large chain (488 aa).

Residues asparagine 127 and threonine 177 each contribute to the substrate site. Catalysis depends on lysine 179, which acts as the Proton acceptor. Lysine 181 contacts substrate. Residues lysine 205, aspartate 207, and glutamate 208 each coordinate Mg(2+). The residue at position 205 (lysine 205) is an N6-carboxylysine. Catalysis depends on histidine 297, which acts as the Proton acceptor. Substrate is bound by residues arginine 298, histidine 330, and serine 382.

This sequence belongs to the RuBisCO large chain family. Type I subfamily. As to quaternary structure, heterohexadecamer of 8 large chains and 8 small chains. The cofactor is Mg(2+).

It localises to the plastid. Its subcellular location is the chloroplast. It catalyses the reaction 2 (2R)-3-phosphoglycerate + 2 H(+) = D-ribulose 1,5-bisphosphate + CO2 + H2O. The catalysed reaction is D-ribulose 1,5-bisphosphate + O2 = 2-phosphoglycolate + (2R)-3-phosphoglycerate + 2 H(+). RuBisCO catalyzes two reactions: the carboxylation of D-ribulose 1,5-bisphosphate, the primary event in carbon dioxide fixation, as well as the oxidative fragmentation of the pentose substrate in the photorespiration process. Both reactions occur simultaneously and in competition at the same active site. This is Ribulose bisphosphate carboxylase large chain from Guillardia theta (Cryptophyte).